We begin with the raw amino-acid sequence, 580 residues long: Peptidyl-prolyl cis-trans isomerase-like 2 (580 aa).

A U-box domain is found at lysine 42–lysine 115. Disordered regions lie at residues isoleucine 182–serine 201, glutamine 227–serine 259, serine 439–proline 459, glutamine 479–threonine 530, and phenylalanine 553–aspartate 580. In terms of domain architecture, PPIase cyclophilin-type spans glutamine 309–isoleucine 468. Residues serine 439–proline 457 are compositionally biased toward polar residues. A compositionally biased stretch (basic and acidic residues) spans glutamate 490–aspartate 507.

Belongs to the cyclophilin-type PPIase family. PPIL2 subfamily.

It localises to the nucleus. The catalysed reaction is [protein]-peptidylproline (omega=180) = [protein]-peptidylproline (omega=0). It catalyses the reaction S-ubiquitinyl-[E2 ubiquitin-conjugating enzyme]-L-cysteine + [acceptor protein]-L-lysine = [E2 ubiquitin-conjugating enzyme]-L-cysteine + N(6)-ubiquitinyl-[acceptor protein]-L-lysine.. Its pathway is protein modification; protein ubiquitination. In terms of biological role, may catalyze the cis-trans isomerization of proline imidic peptide bonds in oligopeptides thereby assisting the folding of proteins. May also function as a chaperone, playing a role in intracellular transport of proteins. May also have a protein ubiquitin ligase activity acting as an E3 ubiquitin protein ligase or as a ubiquitin-ubiquitin ligase promoting elongation of ubiquitin chains on proteins. The protein is Peptidyl-prolyl cis-trans isomerase-like 2 (cyp8) of Emericella nidulans (strain FGSC A4 / ATCC 38163 / CBS 112.46 / NRRL 194 / M139) (Aspergillus nidulans).